Reading from the N-terminus, the 945-residue chain is Poly [ADP-ribose] polymerase 1 (945 aa).

Residues 10–96 (YAIEYAKSGR…KLRQEIQHFK (87 aa)) form a PARP-type 1 zinc finger. 4 residues coordinate Zn(2+): Cys22, Cys25, His54, and Cys57. The PARP-type 2; degenerate zinc finger occupies 117 to 183 (IKTEKSLSNR…DYEENFKIKA (67 aa)). The interval 195–251 (RRSTEPATPASASPTPPEAETPVLSAEGSPESSNKRPASSEIIEIDGEGNPDENDFA) is disordered. The span at 237 to 248 (IEIDGEGNPDEN) shows a compositional bias: acidic residues. One can recognise a PADR1 zinc-binding domain in the interval 258–397 (KEARLMEVQK…NQMSERLYIG (140 aa)). Residues 324–369 (GCPIICQTCSNGKIVYNSSCRTYVCTGYATEYSKCTYESKNPIRTP) form a zinc ribbon region. 4 residues coordinate Zn(2+): Cys329, Cys332, Cys348, and Cys358. The WGR domain maps to 464 to 563 (RCHVFKNEID…KHFRKMPGMF (100 aa)). A PARP alpha-helical domain is found at 586-704 (KTLLPKSVKE…DIKFAYDQIS (119 aa)). Residues 717-945 (DPVDINYQKL…RVKMHHARHL (229 aa)) form the PARP catalytic domain.

Belongs to the ARTD/PARP family.

The protein resides in the nucleus. It carries out the reaction NAD(+) + (ADP-D-ribosyl)n-acceptor = nicotinamide + (ADP-D-ribosyl)n+1-acceptor + H(+).. The enzyme catalyses L-aspartyl-[protein] + NAD(+) = 4-O-(ADP-D-ribosyl)-L-aspartyl-[protein] + nicotinamide. It catalyses the reaction L-glutamyl-[protein] + NAD(+) = 5-O-(ADP-D-ribosyl)-L-glutamyl-[protein] + nicotinamide. With respect to regulation, inhibited by N-(6-oxo-5,6-dihydrophenanthridin-2-yl)-N,N-dimethylacetamide HCl (PJ34), 1,5-dihydroxyisoquinoline (DHQ) and 3-aminobenzamide (3AB). Functionally, poly[ADP-ribose] polymerase modifies various nuclear proteins by poly(ADP-ribosyl)ation, a post-translational modification synthesized after DNA damage that appears as an obligatory step in a detection/signaling pathway leading to the reparation of DNA strand breaks and programmed cell death. Involved in protection of the genome against mutations. The sequence is that of Poly [ADP-ribose] polymerase 1 from Caenorhabditis elegans.